Reading from the N-terminus, the 527-residue chain is Catalase (527 aa).

Residues 1–22 (MSDSRDPASDQMKQWKEQRASQ) show a composition bias toward basic and acidic residues. A disordered region spans residues 1–34 (MSDSRDPASDQMKQWKEQRASQRPDVLTTGGGNP). Position 2 is an N-acetylserine (Ser-2). Ser-9 is modified (phosphoserine). Position 13 is an N6-succinyllysine (Lys-13). The residue at position 21 (Ser-21) is a Phosphoserine. Catalysis depends on residues His-75 and Asn-148. His-194, Ser-201, Arg-203, and Asn-213 together coordinate NADP(+). Lys-221 bears the N6-succinyllysine mark. Lys-233 bears the N6-acetyllysine mark. Positions 237, 303, 305, and 306 each coordinate NADP(+). Lys-306 carries the post-translational modification N6-acetyllysine; alternate. Lys-306 carries the post-translational modification N6-succinyllysine; alternate. Tyr-358 contributes to the heme binding site. Phosphoserine is present on residues Ser-417 and Ser-422. The residue at position 430 (Lys-430) is an N6-acetyllysine; alternate. At Lys-430 the chain carries N6-succinyllysine; alternate. Ser-434 is modified (phosphoserine). Lys-449 and Lys-480 each carry N6-acetyllysine; alternate. N6-succinyllysine; alternate is present on residues Lys-449 and Lys-480. Lys-499 carries the post-translational modification N6-acetyllysine. The residue at position 511 (Thr-511) is a Phosphothreonine. Position 517 is a phosphoserine (Ser-517). Residue Lys-522 is modified to N6-succinyllysine. Positions 524 to 527 (KANL) match the Microbody targeting signal; atypical motif.

It belongs to the catalase family. As to quaternary structure, homotetramer. Interacts (via microbody targeting signal) with PEX5, monomeric form interacts with PEX5, leading to its translocation into peroxisomes. Heme is required as a cofactor. It depends on NADP(+) as a cofactor.

The protein localises to the peroxisome matrix. The enzyme catalyses 2 H2O2 = O2 + 2 H2O. In terms of biological role, catalyzes the degradation of hydrogen peroxide (H(2)O(2)) generated by peroxisomal oxidases to water and oxygen, thereby protecting cells from the toxic effects of hydrogen peroxide. Promotes growth of cells including T-cells, B-cells, myeloid leukemia cells, melanoma cells, mastocytoma cells and normal and transformed fibroblast cells. The chain is Catalase (Cat) from Mus musculus (Mouse).